The following is a 451-amino-acid chain: 3-phosphoshikimate 1-carboxyvinyltransferase (451 aa).

3-phosphoshikimate contacts are provided by Lys38, Ser39, and Arg43. Lys38 is a phosphoenolpyruvate binding site. The phosphoenolpyruvate site is built by Gly111 and Arg140. Ser185, Gln187, Asp335, and Lys362 together coordinate 3-phosphoshikimate. Position 187 (Gln187) interacts with phosphoenolpyruvate. Asp335 functions as the Proton acceptor in the catalytic mechanism. The phosphoenolpyruvate site is built by Arg366 and Arg408.

It belongs to the EPSP synthase family. As to quaternary structure, monomer.

The protein localises to the cytoplasm. The catalysed reaction is 3-phosphoshikimate + phosphoenolpyruvate = 5-O-(1-carboxyvinyl)-3-phosphoshikimate + phosphate. It participates in metabolic intermediate biosynthesis; chorismate biosynthesis; chorismate from D-erythrose 4-phosphate and phosphoenolpyruvate: step 6/7. Catalyzes the transfer of the enolpyruvyl moiety of phosphoenolpyruvate (PEP) to the 5-hydroxyl of shikimate-3-phosphate (S3P) to produce enolpyruvyl shikimate-3-phosphate and inorganic phosphate. The sequence is that of 3-phosphoshikimate 1-carboxyvinyltransferase from Crocosphaera subtropica (strain ATCC 51142 / BH68) (Cyanothece sp. (strain ATCC 51142)).